Consider the following 254-residue polypeptide: Triosephosphate isomerase (254 aa).

9 to 11 (NWK) lines the substrate pocket. Catalysis depends on His-96, which acts as the Electrophile. Glu-168 functions as the Proton acceptor in the catalytic mechanism. Substrate-binding residues include Gly-174 and Ser-213.

The protein belongs to the triosephosphate isomerase family. Homodimer.

The protein localises to the cytoplasm. The enzyme catalyses D-glyceraldehyde 3-phosphate = dihydroxyacetone phosphate. It functions in the pathway carbohydrate biosynthesis; gluconeogenesis. Its pathway is carbohydrate degradation; glycolysis; D-glyceraldehyde 3-phosphate from glycerone phosphate: step 1/1. Functionally, involved in the gluconeogenesis. Catalyzes stereospecifically the conversion of dihydroxyacetone phosphate (DHAP) to D-glyceraldehyde-3-phosphate (G3P). The sequence is that of Triosephosphate isomerase from Buchnera aphidicola subsp. Schizaphis graminum (strain Sg).